A 545-amino-acid chain; its full sequence is Phenylalanine--tRNA ligase beta subunit (545 aa).

Positions Phe-268–Pro-343 constitute a B5 domain. Asp-321, Asp-327, Glu-330, and Asp-331 together coordinate Mg(2+).

This sequence belongs to the phenylalanyl-tRNA synthetase beta subunit family. Type 2 subfamily. Tetramer of two alpha and two beta subunits. Mg(2+) serves as cofactor.

Its subcellular location is the cytoplasm. The catalysed reaction is tRNA(Phe) + L-phenylalanine + ATP = L-phenylalanyl-tRNA(Phe) + AMP + diphosphate + H(+). The protein is Phenylalanine--tRNA ligase beta subunit of Saccharolobus islandicus (strain Y.N.15.51 / Yellowstone #2) (Sulfolobus islandicus).